Consider the following 538-residue polypeptide: Xylosidase/arabinosidase 43B (538 aa).

Glutamate 367 serves as the catalytic Proton donor.

The protein belongs to the glycosyl hydrolase 43 family.

The enzyme catalyses Hydrolysis of (1-&gt;4)-beta-D-xylans, to remove successive D-xylose residues from the non-reducing termini.. The catalysed reaction is Hydrolysis of terminal non-reducing alpha-L-arabinofuranoside residues in alpha-L-arabinosides.. With respect to regulation, activity is inhibited by Ag(+), Li(+), Cu(2+), Cr(3+), Co(3+), Ni(2+), Mg(2+), Zn(2+), EDTA, SDS and beta-mercaptoethanol; but not by Mn(2+), Pb(2+), Ca(2+) and Fe(3+). Bifunctional beta-xylosidase/alpha-L-arabinosidases with a low level of xylanase activity. Is most active on 4-nitrophenyl beta-D-xylopyranoside (pNPX) (defined as 100%), moderate on p-nitrophenyl-alpha-L-arabinofuranoside (pNPA) (56.6%), and weak on beechwood xylan (5.7%) and birchwood xylan (2.7%). Is able to attack xylooligosacchardies with degrees of polymerisation of 2-5, releasing the amounts of reducing sugars in the order of xylopentose &gt; xylotetraose &gt; xylotriose &gt; xylobiose, i.e. the rate of xylose released from xylooligosacchardies increased with the chain length. No activity was detected in the presence of carboxymethyl cellulose-sodium (CMC-Na), sugar beet arabinan, AZCL-arabinan (debranched), 4-nitrophenyl a-D - galactopyranoside, 2-nitrophenyl beta-D-galactopyranoside, and 4-nitrophenyl alpha-D-glucopyranoside. This chain is Xylosidase/arabinosidase 43B, found in Humicola insolens (Soft-rot fungus).